Consider the following 498-residue polypeptide: Cytochrome P450 71B31 (498 aa).

Residues 3–23 (MFLGLLFLFPLFFILFKNLLP) form a helical membrane-spanning segment. Cysteine 441 is a heme binding site.

This sequence belongs to the cytochrome P450 family. The cofactor is heme.

The protein localises to the membrane. The sequence is that of Cytochrome P450 71B31 (CYP71B31) from Arabidopsis thaliana (Mouse-ear cress).